Consider the following 136-residue polypeptide: Glutamate mutase sigma subunit (136 aa).

The B12-binding domain occupies 3–136; it reads KKKIVIGVIG…IIDLKKDFKI (134 aa). Adenosylcob(III)alamin-binding positions include 13 to 17, histidine 16, and 61 to 63; these read SDCHT and SSI.

This sequence belongs to the methylaspartate mutase GlmS subunit family. In terms of assembly, heterotetramer composed of 2 epsilon subunits (GlmE) and 2 sigma subunits (GlmS). GlmE exists as a homodimer and GlmS as a monomer. The cofactor is adenosylcob(III)alamin.

It catalyses the reaction (2S,3S)-3-methyl-L-aspartate = L-glutamate. It functions in the pathway amino-acid degradation; L-glutamate degradation via mesaconate pathway; acetate and pyruvate from L-glutamate: step 1/4. In terms of biological role, catalyzes the carbon skeleton rearrangement of L-glutamate to L-threo-3-methylaspartate ((2S,3S)-3-methylaspartate). This is Glutamate mutase sigma subunit from Fusobacterium nucleatum subsp. nucleatum (strain ATCC 25586 / DSM 15643 / BCRC 10681 / CIP 101130 / JCM 8532 / KCTC 2640 / LMG 13131 / VPI 4355).